The primary structure comprises 584 residues: Alpha-glucosidase MAL12 (584 aa).

Asp214 functions as the Nucleophile in the catalytic mechanism. The active-site Proton donor is the Glu276.

The protein belongs to the glycosyl hydrolase 13 family.

The enzyme catalyses Hydrolysis of terminal, non-reducing (1-&gt;4)-linked alpha-D-glucose residues with release of alpha-D-glucose.. The polypeptide is Alpha-glucosidase MAL12 (MAL12) (Saccharomyces cerevisiae (strain ATCC 204508 / S288c) (Baker's yeast)).